The following is an 889-amino-acid chain: F-BAR domain only protein 1 (889 aa).

Residues 1-248 (MSYFGEHFWG…NIENVSVEML (248 aa)) enclose the F-BAR domain. Residues 1-275 (MSYFGEHFWG…LDFEAYSAAA (275 aa)) are mediates membrane-binding. A coiled-coil region spans residues 156-195 (TSQKEMDKAETKTKKAAESLRRSVEKYNSARADFEQKMLD). The segment at 267 to 442 (DFEAYSAAAL…KNLFGPPLES (176 aa)) is mediates interaction with the adaptor protein complex AP-2. Residues 294-352 (LSRREREPEPPAAVDFLEPDSGTCPEVDEEGFTVRPDVTQNSTAEPSRFSSSDSDFDDE) are disordered. A phosphoserine mark is found at Ser-295, Ser-347, and Ser-372. Residues 382–596 (ATAGSLILPP…SPLGSSAAST (215 aa)) form a disordered region. Positions 450–469 (TGSSSLGFTSSPSPFSSSSP) are enriched in low complexity. The span at 496–511 (PGTPQSPPSCRAPPPE) shows a compositional bias: pro residues. Ser-530 bears the Phosphoserine mark. Positions 580–596 (LSRSLSPSPLGSSAAST) are enriched in low complexity. Residues 609–889 (HGVSRGPSPV…FATGMYLVSC (281 aa)) are mediates interaction with AGFG1, CALM, DAB2, EPS15, EPS15R, ITSN1 and clathrin. Phosphoserine is present on Ser-616. The region spanning 625–888 (ALPIATAFTE…RFATGMYLVS (264 aa)) is the MHD domain. The interval 826-849 (AGGSGRLSASWEPLSGPSTPSPVA) is disordered.

The protein belongs to the FCHO family. May oligomerize and form homotetramer. Interacts with AP2A2 and AP2B1; 2 subunits of the adaptor protein complex AP-2. Interacts with DAB2. Interacts with clathrin (CLTC or CLTCL1). Interacts with EPS15, EPS15R and ITSN1. Interacts with AGFG1 and CALM. May interact with ACVR1; linking this receptor to clathrin-mediated endocytosis. Predominantly expressed in lymphoid cells.

The protein localises to the membrane. Its subcellular location is the clathrin-coated pit. Functions in an early step of clathrin-mediated endocytosis. Has both a membrane binding/bending activity and the ability to recruit proteins essential to the formation of functional clathrin-coated pits. May regulate Bmp signaling by regulating clathrin-mediated endocytosis of Bmp receptors. Involved in the regulation of T-cell poliferation and activation. Affects TCR clustering upon receptor triggering and modulates its internalisation, playing a role in TCR-dependent T-cell activation. The sequence is that of F-BAR domain only protein 1 from Homo sapiens (Human).